A 76-amino-acid polypeptide reads, in one-letter code: UPF0291 protein MW2494 (76 aa).

It belongs to the UPF0291 family.

Its subcellular location is the cytoplasm. In Staphylococcus aureus (strain MW2), this protein is UPF0291 protein MW2494.